A 146-amino-acid chain; its full sequence is SecB-like chaperone SmegB (146 aa).

The protein belongs to the SecB-like family.

Functionally, chaperone component of an orphan antitoxin chaperone (AC) system; there is no toxin gene in close genomic proximity. When expressed in E.coli complements the cold-sensitive phenotype of a secB deletion, suggesting it may have a generic chaperone function. Does not however complement the toxin-neutralizing effect of its M.tuberculosis paralog Rv1957 (AC P95257) in E.coli, probably because the antitoxin genes are not from the same family. In Mycolicibacterium smegmatis (strain ATCC 700084 / mc(2)155) (Mycobacterium smegmatis), this protein is SecB-like chaperone SmegB.